A 218-amino-acid polypeptide reads, in one-letter code: MSRISAEAEKVRHALIEKGIETPMIALTKSKNERRIGIENRMREVMQLIGLDLTDDSLEETPVRLAKMFIDEIFSGLDYTNFPKITNIENRMKVSEMVLVNDVTLTSTCEHHFVTIDGLVSVAYYPKKWVIGLSKINRVVQFFAQRPQVQERLTEQILLAFQTILETEDVAVYMKATHFCVKCRGIKDTNSYTVTSAFGGVFLEDRETRKEFLSLINK.

The Zn(2+) site is built by C109, H112, and C180.

This sequence belongs to the GTP cyclohydrolase I family. In terms of assembly, toroid-shaped homodecamer, composed of two pentamers of five dimers.

The enzyme catalyses GTP + H2O = 7,8-dihydroneopterin 3'-triphosphate + formate + H(+). The protein operates within cofactor biosynthesis; 7,8-dihydroneopterin triphosphate biosynthesis; 7,8-dihydroneopterin triphosphate from GTP: step 1/1. The protein is GTP cyclohydrolase 1 of Mannheimia succiniciproducens (strain KCTC 0769BP / MBEL55E).